Consider the following 281-residue polypeptide: DegV domain-containing protein (281 aa).

A DegV domain is found at 3–280 (WKIVSDSGCD…EGGLLMGYEI (278 aa)). Hexadecanoate contacts are provided by serine 63 and serine 91.

In terms of biological role, may bind long-chain fatty acids, such as palmitate, and may play a role in lipid transport or fatty acid metabolism. This is DegV domain-containing protein from Streptococcus gordonii.